A 79-amino-acid polypeptide reads, in one-letter code: Cytochrome b (79 aa).

A run of 3 helical transmembrane segments spans residues 1–7 (SALFLAM), 31–52 (WLIR…YLHI), and 67–79 (WNIG…LTMA). Positions 37 and 51 each coordinate heme b.

Belongs to the cytochrome b family. In terms of assembly, the cytochrome bc1 complex contains 11 subunits: 3 respiratory subunits (MT-CYB, CYC1 and UQCRFS1), 2 core proteins (UQCRC1 and UQCRC2) and 6 low-molecular weight proteins (UQCRH/QCR6, UQCRB/QCR7, UQCRQ/QCR8, UQCR10/QCR9, UQCR11/QCR10 and a cleavage product of UQCRFS1). This cytochrome bc1 complex then forms a dimer. Heme b is required as a cofactor.

The protein resides in the mitochondrion inner membrane. In terms of biological role, component of the ubiquinol-cytochrome c reductase complex (complex III or cytochrome b-c1 complex) that is part of the mitochondrial respiratory chain. The b-c1 complex mediates electron transfer from ubiquinol to cytochrome c. Contributes to the generation of a proton gradient across the mitochondrial membrane that is then used for ATP synthesis. This chain is Cytochrome b (MT-CYB), found in Dipodomys heermanni (Heermann's kangaroo rat).